The primary structure comprises 329 residues: MLSLKSEVLARHLPLFNGKSILLFGNVRDRFADQIRSISSHVAIFSHYFDYARHYNDVEFGLDCTTPANLGVFYWTKNKQECHYQLLQWLSQTAIGQQMLIIGENRAGVRSVEKLLSPFGQIAKIDSARRCGLYHFELQTIPQFDCQKFWKSYRLADLTVLSLPAAFSSTELDAGSQLLLSSFTNQDRLTGNVLDLGCGAGVIGAYLKQRFPAISLTMSDIHSMAIHSAQATLAKNKLTGTVIASDVFSHINDRFDLIVSNPPFHDDIDTAYHTVESLIMQAKNHLNYGGELRIVANAFLPYPDLLDKAFGSHQVVTKSNKFKVYSARV.

Belongs to the methyltransferase superfamily. RsmC family. In terms of assembly, monomer.

The protein resides in the cytoplasm. It catalyses the reaction guanosine(1207) in 16S rRNA + S-adenosyl-L-methionine = N(2)-methylguanosine(1207) in 16S rRNA + S-adenosyl-L-homocysteine + H(+). In terms of biological role, specifically methylates the guanine in position 1207 of 16S rRNA in the 30S particle. The protein is Ribosomal RNA small subunit methyltransferase C of Haemophilus ducreyi (strain 35000HP / ATCC 700724).